The chain runs to 199 residues: MQYPEAIGRLIESFTKLPGIGPKTAVRLAFHVLDMEEDDVLTFAKSLVSAKRDIKYCTVCGHITDIDPCAICKDSHRDETVVCVVQDSRDVIAMEKMREYRGKYHVLHGAISPMEGIGPEDINVSSLLTRLQENESIQEVILATNPNIEGEATSMYLSRLLKPTGIRVTRLAHGLPVGGDLEYADEVTLSRAMEGRREL.

The segment at 57–72 adopts a C4-type zinc-finger fold; it reads CTVCGHITDIDPCAIC. The Toprim domain occupies 80–176; the sequence is TVVCVVQDSR…RVTRLAHGLP (97 aa).

Belongs to the RecR family.

Functionally, may play a role in DNA repair. It seems to be involved in an RecBC-independent recombinational process of DNA repair. It may act with RecF and RecO. The sequence is that of Recombination protein RecR from Exiguobacterium sp. (strain ATCC BAA-1283 / AT1b).